We begin with the raw amino-acid sequence, 273 residues long: ATP synthase subunit a (273 aa).

Transmembrane regions (helical) follow at residues 34–54 (IINMDTIFWSIFAGVVGCLFM), 94–114 (FIAPLALTVFVWVALMNSLDF), 115–135 (LPVDMFSAFFHAVGLDSLITH), 143–163 (DLNGTMGIALGVFALMIFYNI), 171–191 (FVHELFAAPFGIWLAPFNLLL), 218–238 (FLLIALLGSTATAFGFFGHVV), and 244–264 (AIFHILIVFLQAFIFMMLTLV).

It belongs to the ATPase A chain family. As to quaternary structure, F-type ATPases have 2 components, CF(1) - the catalytic core - and CF(0) - the membrane proton channel. CF(1) has five subunits: alpha(3), beta(3), gamma(1), delta(1), epsilon(1). CF(0) has three main subunits: a(1), b(2) and c(9-12). The alpha and beta chains form an alternating ring which encloses part of the gamma chain. CF(1) is attached to CF(0) by a central stalk formed by the gamma and epsilon chains, while a peripheral stalk is formed by the delta and b chains.

The protein localises to the cell inner membrane. Its function is as follows. Key component of the proton channel; it plays a direct role in the translocation of protons across the membrane. This Janthinobacterium sp. (strain Marseille) (Minibacterium massiliensis) protein is ATP synthase subunit a.